The chain runs to 867 residues: Bifunctional isopimaradiene synthase, chloroplastic (867 aa).

Residues 1-68 (MALLSSSLSS…VGEGTTSLPY (68 aa)) constitute a chloroplast transit peptide. Lysine 267 lines the substrate pocket. Mg(2+) is bound by residues aspartate 400 and aspartate 402. Positions 400–403 (DIDD) match the DXDD motif motif. Residue lysine 487 participates in substrate binding. Residues aspartate 619, aspartate 623, asparagine 763, threonine 767, and glutamate 771 each coordinate Mg(2+). The DDXXD motif signature appears at 619-623 (DDLYD).

Belongs to the terpene synthase family. Tpsd subfamily. The cofactor is Mg(2+).

It localises to the plastid. The protein localises to the chloroplast. It catalyses the reaction (2E,6E,10E)-geranylgeranyl diphosphate = (+)-copalyl diphosphate. The catalysed reaction is (+)-copalyl diphosphate = isopimara-7,15-diene + diphosphate. The protein operates within terpene metabolism; oleoresin biosynthesis. Functionally, involved in defensive oleoresin formation in conifers in response to insect attack or other injury. Involved in diterpene (C20) olefins biosynthesis. Bifunctional enzyme that catalyzes two sequential cyclizations of geranylgeranyl diphosphate (GGPP) to isopimara-7,15-diene. The polypeptide is Bifunctional isopimaradiene synthase, chloroplastic (TPS-ISO) (Picea abies (Norway spruce)).